A 172-amino-acid chain; its full sequence is HAD-like hydrolase superfamily protein P8B7.31 (172 aa).

Catalysis depends on aspartate 14, which acts as the Nucleophile. Positions 14, 16, and 137 each coordinate Mg(2+). The Proton donor role is filled by aspartate 16.

Belongs to the HAD-like hydrolase superfamily.

It is found in the cytoplasm. The protein localises to the nucleus. The sequence is that of HAD-like hydrolase superfamily protein P8B7.31 from Schizosaccharomyces pombe (strain 972 / ATCC 24843) (Fission yeast).